Reading from the N-terminus, the 331-residue chain is Osmotic avoidance abnormal protein 8 (331 aa).

A signal peptide spans 1–21 (MPAKMLKWLLIHIFLIHSIFC).

In terms of tissue distribution, expressed in the hypodermal syncitium but not in hypodermal seam cells.

The protein resides in the secreted. Negative regulator of the osmotic stress response. Acts via the transmembrane protein ptr-23. In Caenorhabditis elegans, this protein is Osmotic avoidance abnormal protein 8 (osm-8).